The sequence spans 397 residues: MDVLYSLSKTLKDARDKIVEGTLYSNVSDLIQQFNQMIITMNGNEFQTGGIGNLPIRNWNFDFGLLGTTLLNLDANYVETARNTIDYFVDFVDNVCMDEMVRESQRNGIAPQSDSLIKLSGIKFKRINFDNSSEYIENWNLQNRRQRTGFTFHKPNIFPYSASFTLNRSQPAHDNLMGTMWLNAGSEIQVAGFDYSCAINAPANTQQFEHIVQLRRVLTTATITLLPDAERFSFPRVITSADGATTWYFNPVILRPNNVEIEFLLNGQIINTYQARFGTIIARNFDTIRLSFQLMRPPNMTPAVAALFPNAQPFEHHATVGLTLRIESAVCESVLADASETMLANVTSVRQEYAIPVGPVFPPGMNWTDLITNYSPSREDNLQRVFTVASIRSMLVK.

The segment at 62 to 73 is interaction with the inner capsid protein VP2; that stretch reads DFGLLGTTLLNL. Residue histidine 153 coordinates Zn(2+). 2 residues coordinate Ca(2+): asparagine 266 and aspartate 286.

This sequence belongs to the rotavirus VP6 family. Homotrimer. Interacts with the inner capsid protein VP2. Interacts with the outer capsid glycoprotein VP7. Interacts with the outer capsid protein VP5*. The N-terminus is blocked. In terms of processing, sumoylated with SUMO1 and SUMO2. Sumoylation of viral proteins seems to have a positive role on viral replication.

It is found in the virion. Functionally, intermediate capsid protein that self assembles to form an icosahedral capsid with a T=13 symmetry, which consists of 230 trimers of VP6, with channels at each of its five-fold vertices. This capsid constitutes the middle concentric layer of the viral mature particle. The innermost VP2 capsid and the intermediate VP6 capsid remain intact following cell entry to protect the dsRNA from degradation and to prevent unfavorable antiviral responses in the host cell during all the replication cycle of the virus. Nascent transcripts are transcribed within the structural confines of this double-layered particle (DLP) and are extruded through the channels at the five-fold axes. VP6 is required for the transcription activity of the DLP. This Rotavirus A (strain RVA/Cow/France/RF/1975/G6P6[1]) (RV-A) protein is Intermediate capsid protein VP6.